A 622-amino-acid chain; its full sequence is Pesticidal crystal protein Cry2Ac (622 aa).

The protein belongs to the delta endotoxin family.

In terms of biological role, promotes colloidosmotic lysis by binding to the midgut epithelial cells of lepidopteran larvae. Has low activity on dipteran larvae. In Bacillus thuringiensis, this protein is Pesticidal crystal protein Cry2Ac (cry2Ac).